We begin with the raw amino-acid sequence, 249 residues long: Isoprenyl transferase (249 aa).

Asp-29 is a catalytic residue. Residue Asp-29 coordinates Mg(2+). Substrate-binding positions include 30–33 (GNGR), Trp-34, Arg-42, His-46, and 74–76 (STE). Asn-77 serves as the catalytic Proton acceptor. Substrate is bound by residues Trp-78, Arg-80, Arg-197, and 203 to 205 (RLS). Glu-216 provides a ligand contact to Mg(2+).

This sequence belongs to the UPP synthase family. As to quaternary structure, homodimer. The cofactor is Mg(2+).

Catalyzes the condensation of isopentenyl diphosphate (IPP) with allylic pyrophosphates generating different type of terpenoids. This is Isoprenyl transferase from Gloeobacter violaceus (strain ATCC 29082 / PCC 7421).